The following is an 847-amino-acid chain: Putative disease resistance RPP13-like protein 2 (847 aa).

A coiled-coil region spans residues G26–Q42. The 305-residue stretch at S142–E446 folds into the NB-ARC domain. Residue G191 to T198 participates in ATP binding. LRR repeat units follow at residues L587 to L610, F612 to S634, L703 to F726, F749 to R774, and I807 to N830.

It belongs to the disease resistance NB-LRR family. RPP13 subfamily.

Functionally, potential disease resistance protein. The polypeptide is Putative disease resistance RPP13-like protein 2 (RPP13L2) (Arabidopsis thaliana (Mouse-ear cress)).